The chain runs to 254 residues: Phosphoglycerate mutase 1 (254 aa).

Substrate contacts are provided by residues 10 to 17 (RHGESAWN) and 23 to 24 (SG). His-11 functions as the Tele-phosphohistidine intermediate in the catalytic mechanism. 2 positions are modified to phosphoserine: Ser-14 and Ser-23. Tyr-26 carries the post-translational modification Phosphotyrosine. Ser-31 is modified (phosphoserine). Substrate contacts are provided by residues Arg-62, 89 to 92 (ERHY), and Lys-100. The active-site Proton donor/acceptor is Glu-89. Lys-106 is modified (N6-acetyllysine). Substrate is bound at residue 116–117 (RR). A Phosphoserine modification is found at Ser-118. Position 187-188 (187-188 (GN)) interacts with substrate. Position 251 is an N6-acetyllysine; alternate (Lys-251). Lys-251 carries the post-translational modification N6-succinyllysine; alternate. Lys-253 and Lys-254 each carry N6-acetyllysine.

The protein belongs to the phosphoglycerate mutase family. BPG-dependent PGAM subfamily. Homodimer. Post-translationally, acetylated at Lys-253, Lys-253 and Lys-254 under high glucose condition. Acetylation increases catalytic activity. Under glucose restriction SIRT1 levels dramatically increase and it deacetylates the enzyme.

It catalyses the reaction (2R)-2-phosphoglycerate = (2R)-3-phosphoglycerate. It carries out the reaction (2R)-3-phospho-glyceroyl phosphate = (2R)-2,3-bisphosphoglycerate + H(+). Functionally, catalyzes the interconversion of 2-phosphoglycerate and 3-phosphoglyceratea crucial step in glycolysis, by using 2,3-bisphosphoglycerate. Also catalyzes the interconversion of (2R)-2,3-bisphosphoglycerate and (2R)-3-phospho-glyceroyl phosphate. The sequence is that of Phosphoglycerate mutase 1 from Pongo abelii (Sumatran orangutan).